A 111-amino-acid chain; its full sequence is Nucleoid-associated protein PFL_1905 (111 aa).

Disordered stretches follow at residues 1–20 (MKGG…EKMA) and 88–111 (SNSQ…KLPF).

Belongs to the YbaB/EbfC family. In terms of assembly, homodimer.

It localises to the cytoplasm. The protein localises to the nucleoid. Functionally, binds to DNA and alters its conformation. May be involved in regulation of gene expression, nucleoid organization and DNA protection. The polypeptide is Nucleoid-associated protein PFL_1905 (Pseudomonas fluorescens (strain ATCC BAA-477 / NRRL B-23932 / Pf-5)).